Reading from the N-terminus, the 171-residue chain is Shikimate kinase (171 aa).

11–16 (ATGKTT) is an ATP binding site. A Mg(2+)-binding site is contributed by Thr-15. Substrate contacts are provided by Asp-33, Arg-57, and Gly-79. An ATP-binding site is contributed by Arg-117. A substrate-binding site is contributed by Arg-136.

The protein belongs to the shikimate kinase family. In terms of assembly, monomer. Mg(2+) is required as a cofactor.

It is found in the cytoplasm. The enzyme catalyses shikimate + ATP = 3-phosphoshikimate + ADP + H(+). Its pathway is metabolic intermediate biosynthesis; chorismate biosynthesis; chorismate from D-erythrose 4-phosphate and phosphoenolpyruvate: step 5/7. In terms of biological role, catalyzes the specific phosphorylation of the 3-hydroxyl group of shikimic acid using ATP as a cosubstrate. The chain is Shikimate kinase from Thermoanaerobacter pseudethanolicus (strain ATCC 33223 / 39E) (Clostridium thermohydrosulfuricum).